The sequence spans 144 residues: Snaclec coagulation factor IX/factor X-binding protein subunit B1 (144 aa).

Residues 1–23 (MGRFIFVSFGLLVVFLSLSGTAA) form the signal peptide. 3 disulfide bridges follow: C25/C36, C53/C142, and C119/C134. Residues 32-143 (YEGHCYKPFN…CRMMANFVCE (112 aa)) form the C-type lectin domain.

This sequence belongs to the snaclec family. In terms of assembly, heterodimer of subunits A and B1; disulfide-linked. Expressed by the venom gland.

The protein localises to the secreted. Functionally, anticoagulant protein which binds to the gamma-carboxyglutamic acid-domain regions of factors IX (F9) and factor X (F10) in the presence of calcium with a 1 to 1 stoichiometry. The chain is Snaclec coagulation factor IX/factor X-binding protein subunit B1 from Trimeresurus stejnegeri (Chinese green tree viper).